Here is a 588-residue protein sequence, read N- to C-terminus: Arginine--tRNA ligase (588 aa).

The 'HIGH' region motif lies at 129–139 (PNIAKEMHVGH).

The protein belongs to the class-I aminoacyl-tRNA synthetase family. In terms of assembly, monomer.

The protein localises to the cytoplasm. It catalyses the reaction tRNA(Arg) + L-arginine + ATP = L-arginyl-tRNA(Arg) + AMP + diphosphate. The protein is Arginine--tRNA ligase of Frankia casuarinae (strain DSM 45818 / CECT 9043 / HFP020203 / CcI3).